We begin with the raw amino-acid sequence, 1370 residues long: DNA polymerase II large subunit (1370 aa).

Disordered stretches follow at residues 279 to 317 and 1041 to 1081; these read IGAD…PRAA and AGDA…DGGS.

The protein belongs to the archaeal DNA polymerase II family. In terms of assembly, heterodimer of a large subunit and a small subunit. This protein undergoes a protein self splicing that involves a post-translational excision of the intervening region (intein) followed by peptide ligation.

The enzyme catalyses DNA(n) + a 2'-deoxyribonucleoside 5'-triphosphate = DNA(n+1) + diphosphate. The catalysed reaction is Exonucleolytic cleavage in the 3'- to 5'-direction to yield nucleoside 5'-phosphates.. Possesses two activities: a DNA synthesis (polymerase) and an exonucleolytic activity that degrades single-stranded DNA in the 3'- to 5'-direction. Has a template-primer preference which is characteristic of a replicative DNA polymerase. The protein is DNA polymerase II large subunit (polC) of Halobacterium salinarum (strain ATCC 700922 / JCM 11081 / NRC-1) (Halobacterium halobium).